The chain runs to 333 residues: Phenylalanine--tRNA ligase alpha subunit (333 aa).

Glu258 provides a ligand contact to Mg(2+).

This sequence belongs to the class-II aminoacyl-tRNA synthetase family. Phe-tRNA synthetase alpha subunit type 1 subfamily. As to quaternary structure, tetramer of two alpha and two beta subunits. It depends on Mg(2+) as a cofactor.

It is found in the cytoplasm. The enzyme catalyses tRNA(Phe) + L-phenylalanine + ATP = L-phenylalanyl-tRNA(Phe) + AMP + diphosphate + H(+). In Wigglesworthia glossinidia brevipalpis, this protein is Phenylalanine--tRNA ligase alpha subunit.